Reading from the N-terminus, the 842-residue chain is Elongation factor 2 (842 aa).

Positions 17–346 (TNVRNMSVIA…MIVLHLPSPV (330 aa)) constitute a tr-type G domain. GTP contacts are provided by residues 26–33 (AHVDHGKS), 158–161 (NKVD), and 213–215 (SGL). Lys509 carries the post-translational modification N6,N6,N6-trimethyllysine; by EFM3; alternate. Lys509 is subject to N6,N6-dimethyllysine; by EFM3; alternate. N6-methyllysine; by EFM3; alternate is present on Lys509. Ser579 carries the post-translational modification Phosphoserine. Residue Lys613 is modified to N6,N6-dimethyllysine; by EFM2; alternate. N6-methyllysine; by EFM2; alternate is present on Lys613. The residue at position 699 (His699) is a Diphthamide. 2 positions are modified to phosphothreonine: Thr713 and Thr763. A Glycyl lysine isopeptide (Lys-Gly) (interchain with G-Cter in ubiquitin) cross-link involves residue Lys841.

This sequence belongs to the TRAFAC class translation factor GTPase superfamily. Classic translation factor GTPase family. EF-G/EF-2 subfamily. In terms of assembly, binds to 80S ribosomes. Actively translating ribosomes show mutually exclusive binding of eIF5a (HYP2 or ANB1) and EFT1/eEF2. Interacts with the 40S ribosomal subunit protein RPL9A; the interaction is direct. Interacts with the 60S ribosomal subunit proteins RPL12A; the interaction is direct. Interacts with RPS23A; the interaction is direct. Interacts with 18S rRNA; the interaction is direct. Interacts with 25S rRNA; the interaction is direct. Interacts with RPL0. Interacts with STM1; promoting ribosome inactivation. Post-translationally, (Microbial infection) Diphthamide can be ADP-ribosylated by diphtheria toxin and by Pseudomonas exotoxin A, thus abolishing its function.

It localises to the cytoplasm. It catalyses the reaction GTP + H2O = GDP + phosphate + H(+). It participates in protein biosynthesis; polypeptide chain elongation. Inhibited by fusidic acid and sordarin, which prevent the release of eEF2 from the ribosome after the translocation step. While fusidic acid acts on all eukaryotic eEF2, sordarin specifically binds and inhibits only selected fungal eEF2. Functionally, catalyzes the GTP-dependent ribosomal translocation step during translation elongation. During this step, the ribosome changes from the pre-translocational (PRE) to the post-translocational (POST) state as the newly formed A-site-bound peptidyl-tRNA and P-site-bound deacylated tRNA move to the P and E sites, respectively. Catalyzes the coordinated movement of the two tRNA molecules, the mRNA and conformational changes in the ribosome. This is Elongation factor 2 (EFT1) from Saccharomyces cerevisiae (strain ATCC 204508 / S288c) (Baker's yeast).